We begin with the raw amino-acid sequence, 438 residues long: GTPase Obg (438 aa).

Positions 6 to 164 (AEFVDRVKIF…RWLELELKIL (159 aa)) constitute an Obg domain. Residues 165–335 (ADVGLVGYPN…LLDRVASIVR (171 aa)) form the OBG-type G domain. GTP is bound by residues 171–178 (GYPNVGKS), 196–200 (FTTLV), 217–220 (DIPG), 287–290 (NKID), and 316–318 (SAV). Mg(2+) contacts are provided by S178 and T198. An OCT domain is found at 358–438 (VWRKLPERFE…IGNFEFEYRE (81 aa)).

The protein belongs to the TRAFAC class OBG-HflX-like GTPase superfamily. OBG GTPase family. Monomer. Mg(2+) serves as cofactor.

It localises to the cytoplasm. Its function is as follows. An essential GTPase which binds GTP, GDP and possibly (p)ppGpp with moderate affinity, with high nucleotide exchange rates and a fairly low GTP hydrolysis rate. Plays a role in control of the cell cycle, stress response, ribosome biogenesis and in those bacteria that undergo differentiation, in morphogenesis control. This chain is GTPase Obg, found in Thermotoga neapolitana (strain ATCC 49049 / DSM 4359 / NBRC 107923 / NS-E).